We begin with the raw amino-acid sequence, 149 residues long: Transcriptional regulator MraZ (149 aa).

2 consecutive SpoVT-AbrB domains span residues 6–52 and 81–124; these read RSHR…PYPD and AEEM…DQSK.

Belongs to the MraZ family. As to quaternary structure, forms oligomers.

The protein resides in the cytoplasm. It is found in the nucleoid. This is Transcriptional regulator MraZ from Nitratidesulfovibrio vulgaris (strain ATCC 29579 / DSM 644 / CCUG 34227 / NCIMB 8303 / VKM B-1760 / Hildenborough) (Desulfovibrio vulgaris).